The primary structure comprises 207 residues: MTMDGDSSTTDASQLGISADYIGGSHYVIQPHDDTEDSMNDHEDTNGSKESFREQDIYLPIANVARIMKNAIPQTGKIAKDAKECVQECVSEFISFITSEASERCHQEKRKTINGEDILFAMSTLGFDSYVEPLKLYLQKFREAMKGEKGIGGAVTATDGLSEELTEEAFTNQLPAGLITTDGQQQNVMVYTTSYQQISGVQQIQFS.

The interval 1–52 is a domain; it reads MTMDGDSSTTDASQLGISADYIGGSHYVIQPHDDTEDSMNDHEDTNGSKESF. A disordered region spans residues 27–52; it reads YVIQPHDDTEDSMNDHEDTNGSKESF. The segment covering 39-52 has biased composition (basic and acidic residues); sequence MNDHEDTNGSKESF. Positions 53–142 are b domain; that stretch reads REQDIYLPIA…PLKLYLQKFR (90 aa). Residues 59-65 mediate DNA binding; the sequence is LPIANVA. Residues 86–97 are subunit association domain (SAD); that stretch reads VQECVSEFISFI. Residue Lys-140 forms a Glycyl lysine isopeptide (Lys-Gly) (interchain with G-Cter in ubiquitin) linkage. Residues 143 to 207 are c domain; sequence EAMKGEKGIG…ISGVQQIQFS (65 aa).

Belongs to the NFYB/HAP3 subunit family. Heterotrimeric transcription factor composed of three components, NF-YA, NF-YB and NF-YC. NF-YB and NF-YC must interact and dimerize for NF-YA association and DNA binding. Interacts with C1QBP. Post-translationally, monoubiquitination at Lys-140 plays an important role in transcriptional activation by allowing the deposition of histone H3 methylations as well as histone H2B monoubiquitination at 'Lys-121'.

It is found in the nucleus. Its function is as follows. Component of the sequence-specific heterotrimeric transcription factor (NF-Y) which specifically recognizes a 5'-CCAAT-3' box motif found in the promoters of its target genes. NF-Y can function as both an activator and a repressor, depending on its interacting cofactors. This Homo sapiens (Human) protein is Nuclear transcription factor Y subunit beta (NFYB).